The following is a 170-amino-acid chain: Ribosome maturation factor RimM (170 aa).

A PRC barrel domain is found at 97–170; that stretch reads NADEYYWVDL…LVVVDWDPEF (74 aa).

It belongs to the RimM family. In terms of assembly, binds ribosomal protein uS19.

The protein resides in the cytoplasm. Functionally, an accessory protein needed during the final step in the assembly of 30S ribosomal subunit, possibly for assembly of the head region. Essential for efficient processing of 16S rRNA. May be needed both before and after RbfA during the maturation of 16S rRNA. It has affinity for free ribosomal 30S subunits but not for 70S ribosomes. In Stenotrophomonas maltophilia (strain R551-3), this protein is Ribosome maturation factor RimM.